The primary structure comprises 158 residues: Deoxyuridine 5'-triphosphate nucleotidohydrolase (158 aa).

Residues 66–68, asparagine 79, 83–85, and lysine 93 contribute to the substrate site; these read RSG and TID. The segment at 139 to 158 is disordered; that stretch reads RGFGSSGVARKGHYQGKPLA.

The protein belongs to the dUTPase family. It depends on Mg(2+) as a cofactor.

It carries out the reaction dUTP + H2O = dUMP + diphosphate + H(+). Its pathway is pyrimidine metabolism; dUMP biosynthesis; dUMP from dCTP (dUTP route): step 2/2. This enzyme is involved in nucleotide metabolism: it produces dUMP, the immediate precursor of thymidine nucleotides and it decreases the intracellular concentration of dUTP so that uracil cannot be incorporated into DNA. The chain is Deoxyuridine 5'-triphosphate nucleotidohydrolase from Helicobacter hepaticus (strain ATCC 51449 / 3B1).